We begin with the raw amino-acid sequence, 184 residues long: Protein CPn_0803/CP_1068/CPj0803/CpB0832 (184 aa).

This sequence belongs to the chlamydial CPn_0803/CT_584/TC_0873 family.

This is Protein CPn_0803/CP_1068/CPj0803/CpB0832 from Chlamydia pneumoniae (Chlamydophila pneumoniae).